The sequence spans 352 residues: Ion-translocating oxidoreductase complex subunit D (352 aa).

4 helical membrane-spanning segments follow: residues isoleucine 20–glycine 40, glycine 42–leucine 62, isoleucine 89–alanine 109, and proline 123–leucine 143. The residue at position 187 (threonine 187) is an FMN phosphoryl threonine. 5 helical membrane-spanning segments follow: residues isoleucine 214–leucine 234, tryptophan 242–phenylalanine 262, leucine 267–leucine 287, leucine 301–proline 321, and aspartate 322–threonine 342.

This sequence belongs to the NqrB/RnfD family. The complex is composed of six subunits: RsxA, RsxB, RsxC, RsxD, RsxE and RsxG. FMN serves as cofactor.

It is found in the cell inner membrane. Functionally, part of a membrane-bound complex that couples electron transfer with translocation of ions across the membrane. Required to maintain the reduced state of SoxR. In Shigella boydii serotype 18 (strain CDC 3083-94 / BS512), this protein is Ion-translocating oxidoreductase complex subunit D.